We begin with the raw amino-acid sequence, 102 residues long: Protamine-2 (102 aa).

A phosphoserine mark is found at Ser-8, Ser-10, and Ser-37. The tract at residues 16 to 102 (VYGQQLRGQE…RTRRRRCRRH (87 aa)) is disordered. Residues 49 to 102 (GHSHYRRRHCSRRRLHRIHRQQHRSCGRRRRRSCRQRRRHRRGCRTRRRRCRRH) show a composition bias toward basic residues.

This sequence belongs to the protamine P2 family. As to quaternary structure, interacts with TDRP. Proteolytic processing into mature chains is required for histone eviction during spermatogenesis. Transition proteins (TNP1 and TNP2) are required for processing. In terms of tissue distribution, testis.

The protein localises to the nucleus. It localises to the chromosome. Its function is as follows. Protamines substitute for histones in the chromatin of sperm during the haploid phase of spermatogenesis. They compact sperm DNA into a highly condensed, stable and inactive complex. This chain is Protamine-2 (PRM2), found in Hylobates lar (Lar gibbon).